A 64-amino-acid polypeptide reads, in one-letter code: FVCVQARQIDPEQILRTPEKRASCSSRGGICRSTSIGCPRRYHSCHLFHHCRSHGDSCCCPNYG.

Residues 1-17 (FVCVQARQIDPEQILRT) form the signal peptide. A propeptide spanning residues 18–19 (PE) is cleaved from the precursor.

Post-translationally, contains 4 disulfide bonds.

The protein localises to the secreted. The protein resides in the nematocyst. This is Small cysteine-rich protein from Anemonia viridis (Snakelocks anemone).